The sequence spans 244 residues: Protein YIPF4 (244 aa).

The Cytoplasmic portion of the chain corresponds to 1–113 (MQPPGPPPAY…FNRQVVRDNP (113 aa)). Residues 114-134 (DFWGPLAVVLFFSMISLYGQF) traverse the membrane as a helical segment. Over 135 to 138 (RVVS) the chain is Extracellular. Residues 139-159 (WIITIWIFGSLTIFLLARVLG) form a helical membrane-spanning segment. Residues 160-166 (GEVAYGQ) lie on the Cytoplasmic side of the membrane. A helical membrane pass occupies residues 167–187 (VLGVIGYSLLPLIVIAPVLLV). At 188 to 195 (VGSFEVVS) the chain is on the extracellular side. The helical transmembrane segment at 196–216 (TLIKLFGVFWAAYSAASLLVG) threads the bilayer. Residues 217–223 (EEFKTKK) are Cytoplasmic-facing. A helical membrane pass occupies residues 224 to 244 (PLLIYPIFLLYIYFLSLYTGV).

The protein belongs to the YIP1 family. Interacts with YIPF3 and YIPF5. As to quaternary structure, (Microbial infection) Interacts with human papillomavirus (HPV) E5 proteins. Expressed in keratinocytes (at protein level).

It is found in the golgi apparatus. It localises to the cis-Golgi network membrane. Involved in the maintenance of the Golgi structure. This Homo sapiens (Human) protein is Protein YIPF4 (YIPF4).